The chain runs to 485 residues: MSVLLETSAGDIVIDLLVDHAPKLCENFLKLCKVKYYNFSPVHSVQKNFSFQTGDPLGPLSKDSDGGSSIWGHLSGDPSERTFPAFFHPKLKHLERGTVSMATAPLQSDPDVRVAGSQFIITLGQDTDFLDGKAAIFGKVVEGFEALDKINEAIVDEKGHPLIDIRIKHTVILDDPYADPPGLREPSTSPPPTDQQLKTVRIADEAALHEDDNVDEEELERRRRNREAQAQALTLEMMGDLPFAEVKPPENVLFVCKLNPVTGDEDLELIFGRFGKILSCEVIRDQKTGDSLQYAFIEYEDKASCEAAYFKMQGVLIDDRRIHVDFSQSVSKLSDVWRKDTNSKRRTNAGRGGWGGVDELEKRRQYRDEGERVTGGNYRMVYGEEEMKGKVGRNAPKQDKDDGPPPPGPRDNGEPSRQQNRSRSPRPRDRSRDRYHKPRDDRRGDRRDRDRRDQDRNRYRDRDHRDRGREKDRYGRDENDRRSRR.

Residues 1 to 172 (MSVLLETSAG…IDIRIKHTVI (172 aa)) form the PPIase cyclophilin-type domain. One can recognise an RRM domain in the interval 251–329 (NVLFVCKLNP…RRIHVDFSQS (79 aa)). The tract at residues 377–485 (NYRMVYGEEE…RDENDRRSRR (109 aa)) is disordered. Residues 426-485 (RPRDRSRDRYHKPRDDRRGDRRDRDRRDQDRNRYRDRDHRDRGREKDRYGRDENDRRSRR) show a composition bias toward basic and acidic residues.

This sequence belongs to the cyclophilin-type PPIase family. PPIL4 subfamily.

The protein resides in the nucleus. It catalyses the reaction [protein]-peptidylproline (omega=180) = [protein]-peptidylproline (omega=0). Its function is as follows. PPIases accelerate the folding of proteins. It catalyzes the cis-trans isomerization of proline imidic peptide bonds in oligopeptides. The protein is Peptidyl-prolyl cis-trans isomerase-like 4 (CYP6) of Gibberella zeae (strain ATCC MYA-4620 / CBS 123657 / FGSC 9075 / NRRL 31084 / PH-1) (Wheat head blight fungus).